A 693-amino-acid chain; its full sequence is Elongation factor G 1 (693 aa).

A tr-type G domain is found at 4–281 (NKLRNIGISA…AVTRFLPSPH (278 aa)). GTP contacts are provided by residues 13 to 20 (AHIDSGKT), 80 to 84 (DTPGH), and 134 to 137 (NKCD).

Belongs to the TRAFAC class translation factor GTPase superfamily. Classic translation factor GTPase family. EF-G/EF-2 subfamily.

The protein resides in the cytoplasm. Its function is as follows. Catalyzes the GTP-dependent ribosomal translocation step during translation elongation. During this step, the ribosome changes from the pre-translocational (PRE) to the post-translocational (POST) state as the newly formed A-site-bound peptidyl-tRNA and P-site-bound deacylated tRNA move to the P and E sites, respectively. Catalyzes the coordinated movement of the two tRNA molecules, the mRNA and conformational changes in the ribosome. The protein is Elongation factor G 1 of Borrelia garinii subsp. bavariensis (strain ATCC BAA-2496 / DSM 23469 / PBi) (Borreliella bavariensis).